We begin with the raw amino-acid sequence, 300 residues long: MITDKTECNNPLFGRILTAMVTPFTENGDVDYELAIKLSNYLFENGSDGIVLCGTTGESPTLSWAEQHDLFIAVKGSLDASCKVIVGTGSNCTSEAVEATKKAYDSGADGALVVVPYYNKPPQEGLYKHFSSIAKSAKDLPLMLYNIPGRTGCNLLPDTVKKLMDFSNILSIKAASGRIEEVTELRAICGSELSVYSGDDSLLLPMLSVGAVGVVSVASHLVGLQLKEMIHSFQSGKVSNALAIHEKLQPLFKALFMTTNPIPIKAALELSGWDVGNPRSPLSPLNNDMKKQLSFILNSL.

A pyruvate-binding site is contributed by Thr-56. Tyr-145 functions as the Proton donor/acceptor in the catalytic mechanism. Lys-173 functions as the Schiff-base intermediate with substrate in the catalytic mechanism. Val-215 contacts pyruvate.

It belongs to the DapA family. Homotetramer; dimer of dimers.

Its subcellular location is the cytoplasm. It carries out the reaction L-aspartate 4-semialdehyde + pyruvate = (2S,4S)-4-hydroxy-2,3,4,5-tetrahydrodipicolinate + H2O + H(+). Its pathway is amino-acid biosynthesis; L-lysine biosynthesis via DAP pathway; (S)-tetrahydrodipicolinate from L-aspartate: step 3/4. Its function is as follows. Catalyzes the condensation of (S)-aspartate-beta-semialdehyde [(S)-ASA] and pyruvate to 4-hydroxy-tetrahydrodipicolinate (HTPA). The sequence is that of 4-hydroxy-tetrahydrodipicolinate synthase from Prochlorococcus marinus (strain AS9601).